The sequence spans 185 residues: MYINTHDSIFGAGNHKTFTFLYIISLHSSYKLFHFLKMQQNTNVVFKLEVDERKKKKAMKIVCGFSGVTSLNVMEEGKLTVTGEFDNYEMTKKLKKICKHVAIIAAEPIREPEQNRNPVTRREPNREPEQNRSRVTRREPSREPEPNRAPLARRESRPRTHSRPSIPHARPSRVRGENSDGCIIM.

Residues 39 to 106 (QQNTNVVFKL…ICKHVAIIAA (68 aa)) form the HMA domain. The span at 109–158 (IREPEQNRNPVTRREPNREPEQNRSRVTRREPSREPEPNRAPLARRESRP) shows a compositional bias: basic and acidic residues. Residues 109–185 (IREPEQNRNP…GENSDGCIIM (77 aa)) are disordered. A Cysteine methyl ester modification is found at Cys182. Residue Cys182 is the site of S-farnesyl cysteine attachment. A propeptide spans 183–185 (IIM) (removed in mature form).

Belongs to the HIPP family.

Functionally, probable heavy-metal-binding protein. The polypeptide is Heavy metal-associated isoprenylated plant protein 11 (Arabidopsis thaliana (Mouse-ear cress)).